Here is a 1583-residue protein sequence, read N- to C-terminus: Protein mesh (1583 aa).

The N-terminal stretch at 1–21 (MGVKIKLVLAVVLILSANVLG) is a signal peptide. Over 22–1182 (QDEIVNDTES…EFSQRALFLT (1161 aa)) the chain is Extracellular. One can recognise an NIDO domain in the interval 260–415 (GIYFRLDRDL…GRHIFRIDEN (156 aa)). Positions 647-798 (GQRWSNSMCN…VGCETFRFER (152 aa)) constitute an AMOP domain. A VWFD domain is found at 811–1019 (GVAGIFGDPH…HWQLTDREQR (209 aa)). The region spanning 1110-1170 (ISCGILETPR…PDYGYTECLR (61 aa)) is the Sushi domain. Cystine bridges form between Cys-1112–Cys-1152 and Cys-1138–Cys-1168. The helical transmembrane segment at 1183–1203 (WGVIVAVILPLGLLICLLWFW) threads the bilayer. Residues 1204–1472 (CWHKPRSEGK…QEYSSRTLGA (269 aa)) are Cytoplasmic-facing. A compositionally biased stretch (polar residues) spans 1232–1250 (LRSSSMGNITDTMKSSTIP). The disordered stretch occupies residues 1232–1448 (LRSSSMGNIT…IPEAPKSAPV (217 aa)). The span at 1291–1300 (GKSDSGKSDK) shows a compositional bias: basic and acidic residues. Polar residues predominate over residues 1405–1416 (PIPSQYSPTYSE). A helical transmembrane segment spans residues 1473–1493 (TWGIISAVMLPIIIILICVAW). The Extracellular portion of the chain corresponds to 1494 to 1583 (RILQRRKAEE…RQWGGETEIN (90 aa)). Residues 1521–1539 (DSVKVTSDDESIPYKKDVT) are compositionally biased toward basic and acidic residues. The interval 1521–1583 (DSVKVTSDDE…RQWGGETEIN (63 aa)) is disordered.

As to expression, in fifth instar larvae, expressed in midgut epithelial cells (at protein level).

It is found in the membrane. The protein localises to the cell junction. The protein resides in the septate junction. It localises to the lateral cell membrane. Its function is as follows. May be required for the proper organization of smooth septate junctions and for the barrier function of the midgut epithelium. The polypeptide is Protein mesh (Bombyx mori (Silk moth)).